A 38-amino-acid polypeptide reads, in one-letter code: MTGAYAASYLPWILIPIIGWLMPAVVMGLLFLYIESDA.

Residues 12–32 traverse the membrane as a helical segment; it reads WILIPIIGWLMPAVVMGLLFL.

It belongs to the PsaI family.

Its subcellular location is the cellular thylakoid membrane. Functionally, may help in the organization of the PsaL subunit. The polypeptide is Photosystem I reaction center subunit VIII (Gloeothece citriformis (strain PCC 7424) (Cyanothece sp. (strain PCC 7424))).